The sequence spans 1216 residues: MERLATVRARLQEWERAFARLHGRRPAKGDVEAAPEETRALYREYRNLKQAVRQADDRHRVLEQSLAEAAEEAQEPSCWGPHLSRAATQNTQSMPKQSLLSSVQDYGKRLKANLKNTTQTGPTQSRKLQLQKRSLSTVPAPRPPGSKTESPCPDEADDALPRVPEPRPRLGQLQQLRSSLSRRLTSLDPGWLERCHNRVSDLLEVPGACGLDLSAEESQPQMSGKVNIADPDIQSEVSVQSPEAIAQQPAQVLSQSPKSINSKGRKRKWNEKGEDFAQDQPSSGAGPLSEGARATVHGQDPPGEPTQVNVPQPCNSSNQARTEKAKGTTHLHASPRPASLDRGNYIRLNMKNKRFVRVGANRGRLLRKQVWKQKWKKKQAAFGGSGPRATDKDTCFRCGQFGHWASQCSQPGPTLTVQEEGDRDDKQPISTLEEVAQRTGTASCHHSGEETQPAAPELQVPHCPTPMSPLYPPGPLGQVAETPAEVFQALERLGYRAFRPGQERAIMRILSGISTLLVLPTGAGKSLCYQLPALLYAQRSPCLTLVVSPLLSLMDDQVSDLPSCLKAACLHSGMTKKQRESVLKKVRAAQVHVLIVSPEALVGCGARGPGSLPQAAQLPPIAFACIDEVHCLSQWSHNFRPCYLRVCKVLREHMGVRCFLGLTATATRSTARDVAQHLGIAGEFELSGSANIPANLHLSVSMDRDSDQALVTLLQGDRFRTLDSVIIYCTRERIQNGWLALLRTCLSMVGDSRPRGCGPEAIAEAYHAGMSSQERRRVQQAFMRGHLRMVVATVAFGMGLDRPDVRAVLHLGLPPSFESYVQAIGRAGRDGKPAHCHLFMHPQGEDLWELRRHAHADSTDFLAVKRLVQRVFPPCTCSQRPVSKSSPEEVKEHSGQQTYPVLGQACLGHERALPVQSTVQALDMTEEAIETLLCYLELHPRHWLELLPWTYAQCHLHCLGGSAQLQALAHRCPPLAACQAKWPPKDTSQGRSSLEFGVVELADSMGWKLASVRQALHQLKWDPEPKKGAAQGTGVLVKFSELAFHLHSRGDLTDEEKDQICDFLYNRVQAREHKALAHLHQMSKAFRSVAFPSCGPCLEQSNEEHSNQVKTLVSYYFEEEEEEEETMTDTQGPKPGQTQLQDWEDQIRRDVRQLLSLRPEERFSGRAVARIFHGIASPCYPAQVYGLDRRFWRKYLHLDFHALMHLATEELLLRGR.

Disordered regions lie at residues 72–100 (EAQE…QSLL) and 113–171 (NLKN…PRLG). Composition is skewed to polar residues over residues 86 to 100 (AATQ…QSLL) and 114 to 137 (LKNT…SLST). Ser179 and Ser181 each carry phosphoserine. The segment at 235–340 (SEVSVQSPEA…LHASPRPASL (106 aa)) is disordered. Composition is skewed to polar residues over residues 248-262 (QPAQ…SINS) and 306-320 (TQVN…SNQA). The CCHC-type zinc-finger motif lies at 393–410 (DTCFRCGQFGHWASQCSQ). The tract at residues 436–458 (AQRTGTASCHHSGEETQPAAPEL) is disordered. The Helicase ATP-binding domain occupies 506–684 (IMRILSGIST…AQHLGIAGEF (179 aa)). ATP is bound at residue 519-526 (LPTGAGKS). The short motif at 627–630 (DEVH) is the DEAH box element. The Helicase C-terminal domain maps to 705–872 (DSDQALVTLL…AVKRLVQRVF (168 aa)). Residues Cys875, Cys877, Cys906, and His909 each contribute to the Zn(2+) site.

It belongs to the helicase family. RecQ subfamily. As to quaternary structure, interacts with UBR1 and UBR2. Interacts with MCM10; this interaction regulates RECQL4 unwinding activity. Interacts with TOPBP1. Zn(2+) is required as a cofactor.

The protein resides in the cytoplasm. Its subcellular location is the nucleus. The catalysed reaction is Couples ATP hydrolysis with the unwinding of duplex DNA by translocating in the 3'-5' direction.. It catalyses the reaction ATP + H2O = ADP + phosphate + H(+). In terms of biological role, an ATP-dependent DNA helicase which unwinds dsDNA with a 3'-overhang in a 3'-5' direction. May play a role in development of the palate and the limbs. May modulate chromosome segregation. This is ATP-dependent DNA helicase Q4 (Recql4) from Mus musculus (Mouse).